Here is a 322-residue protein sequence, read N- to C-terminus: Undecaprenyl-phosphate 4-deoxy-4-formamido-L-arabinose transferase (322 aa).

The Cytoplasmic segment spans residues 1 to 235 (MFEIHPVKKV…TCLTTTPLRM (235 aa)). The chain crosses the membrane as a helical span at residues 236 to 256 (LSLLGSIIAIGGFSIAVLLVI). The Periplasmic segment spans residues 257 to 269 (LRLTFGPQWAAEG). A helical transmembrane segment spans residues 270–290 (VFMLFAVLFTFIGAQFIGMGL). The Cytoplasmic segment spans residues 291-322 (LGEYIGRIYTDVRARPRYFVQQVIRPSSKENE).

This sequence belongs to the glycosyltransferase 2 family.

It localises to the cell inner membrane. The enzyme catalyses UDP-4-deoxy-4-formamido-beta-L-arabinose + di-trans,octa-cis-undecaprenyl phosphate = 4-deoxy-4-formamido-alpha-L-arabinopyranosyl di-trans,octa-cis-undecaprenyl phosphate + UDP. It participates in glycolipid biosynthesis; 4-amino-4-deoxy-alpha-L-arabinose undecaprenyl phosphate biosynthesis; 4-amino-4-deoxy-alpha-L-arabinose undecaprenyl phosphate from UDP-4-deoxy-4-formamido-beta-L-arabinose and undecaprenyl phosphate: step 1/2. The protein operates within bacterial outer membrane biogenesis; lipopolysaccharide biosynthesis. In terms of biological role, catalyzes the transfer of 4-deoxy-4-formamido-L-arabinose from UDP to undecaprenyl phosphate. The modified arabinose is attached to lipid A and is required for resistance to polymyxin and cationic antimicrobial peptides. The polypeptide is Undecaprenyl-phosphate 4-deoxy-4-formamido-L-arabinose transferase (Escherichia coli O17:K52:H18 (strain UMN026 / ExPEC)).